Reading from the N-terminus, the 253-residue chain is Histone-arginine methyltransferase METTL23 (253 aa).

The tract at residues 1–23 (MDSVRPRAPWAPPPDPASLDSPT) is disordered.

It belongs to the methyltransferase superfamily. METTL23 family. In terms of assembly, interacts with HSPA5, HSP90B1, TUBULIN, UGGT1 and UGGT2. Interacts with TET3. Interacts with STPG4. As to expression, ubiquitously expressed.

It localises to the nucleus. The protein localises to the cytoplasm. It catalyses the reaction L-arginyl-[protein] + 2 S-adenosyl-L-methionine = N(omega),N(omega)-dimethyl-L-arginyl-[protein] + 2 S-adenosyl-L-homocysteine + 2 H(+). Histone methyltransferase that dimethylates histone H3 at 'Arg-17', forming asymmetric dimethylarginine (H3R17me2a), leading to activate transcription via chromatin remodeling. Maternal factor involved in epigenetic chromatin reprogramming of the paternal genome in the zygote: mediates H3R17me2a, promoting histone H3.3 incorporation in the male pronucleus, leading to TET3 recruitment and subsequent DNA demethylation. The polypeptide is Histone-arginine methyltransferase METTL23 (Mus musculus (Mouse)).